Reading from the N-terminus, the 61-residue chain is Small ribosomal subunit protein uS14 (61 aa).

Zn(2+)-binding residues include C24, C27, C40, and C43.

The protein belongs to the universal ribosomal protein uS14 family. Zinc-binding uS14 subfamily. As to quaternary structure, part of the 30S ribosomal subunit. Contacts proteins S3 and S10. It depends on Zn(2+) as a cofactor.

Binds 16S rRNA, required for the assembly of 30S particles and may also be responsible for determining the conformation of the 16S rRNA at the A site. This chain is Small ribosomal subunit protein uS14, found in Borrelia duttonii (strain Ly).